The following is a 930-amino-acid chain: Isoleucine--tRNA ligase (930 aa).

Residues 1–21 (MRVKDTLNLGKTKFPMRGRLP) form a disordered region. The 'HIGH' region signature appears at 57-67 (PYANGPIHIGH). Residue glutamate 555 participates in L-isoleucyl-5'-AMP binding. Positions 596 to 600 (KMSKS) match the 'KMSKS' region motif. Lysine 599 lines the ATP pocket. Positions 889, 892, 909, and 912 each coordinate Zn(2+).

The protein belongs to the class-I aminoacyl-tRNA synthetase family. IleS type 1 subfamily. Monomer. It depends on Zn(2+) as a cofactor.

The protein localises to the cytoplasm. The catalysed reaction is tRNA(Ile) + L-isoleucine + ATP = L-isoleucyl-tRNA(Ile) + AMP + diphosphate. Functionally, catalyzes the attachment of isoleucine to tRNA(Ile). As IleRS can inadvertently accommodate and process structurally similar amino acids such as valine, to avoid such errors it has two additional distinct tRNA(Ile)-dependent editing activities. One activity is designated as 'pretransfer' editing and involves the hydrolysis of activated Val-AMP. The other activity is designated 'posttransfer' editing and involves deacylation of mischarged Val-tRNA(Ile). This Limosilactobacillus fermentum (strain NBRC 3956 / LMG 18251) (Lactobacillus fermentum) protein is Isoleucine--tRNA ligase.